The sequence spans 179 residues: Pyridoxal 5'-phosphate synthase subunit PdxT (179 aa).

48–50 (GES) is an L-glutamine binding site. C79 acts as the Nucleophile in catalysis. L-glutamine-binding positions include R101 and 127 to 128 (IR). Active-site charge relay system residues include H163 and E165.

The protein belongs to the glutaminase PdxT/SNO family. As to quaternary structure, in the presence of PdxS, forms a dodecamer of heterodimers. Only shows activity in the heterodimer.

The enzyme catalyses aldehydo-D-ribose 5-phosphate + D-glyceraldehyde 3-phosphate + L-glutamine = pyridoxal 5'-phosphate + L-glutamate + phosphate + 3 H2O + H(+). The catalysed reaction is L-glutamine + H2O = L-glutamate + NH4(+). It participates in cofactor biosynthesis; pyridoxal 5'-phosphate biosynthesis. Functionally, catalyzes the hydrolysis of glutamine to glutamate and ammonia as part of the biosynthesis of pyridoxal 5'-phosphate. The resulting ammonia molecule is channeled to the active site of PdxS. The sequence is that of Pyridoxal 5'-phosphate synthase subunit PdxT from Francisella tularensis subsp. holarctica (strain FTNF002-00 / FTA).